A 146-amino-acid polypeptide reads, in one-letter code: MSINIDIKKITDLLNSSILFPDDLQELLREKYIVLERKSNGTPTVAHIYKTMARFDNKSIYRIAKFLFMNRPDVIKLLFLEDVEPLLPYKSINISINNTEYPQLEGPIGTKIALLELFNAFRTGISEPIPYYYLPLRKDINNIVTK.

It belongs to the orthopoxvirus OPG114 family. Part of a complex composed of the kinase OPG054, OPG092, OPG100, OPG114, OPG115, OPG142 and OPG157.

The protein resides in the virion. Its function is as follows. Late protein which is part of a large complex required for early virion morphogenesis. This complex participates in the formation of virosomes and the incorporation of virosomal contents into nascent immature virions. The chain is Core protein OPG114 (OPG114) from Monkeypox virus.